The following is a 91-amino-acid chain: Elongation factor 1-beta (91 aa).

The protein belongs to the EF-1-beta/EF-1-delta family.

Functionally, promotes the exchange of GDP for GTP in EF-1-alpha/GDP, thus allowing the regeneration of EF-1-alpha/GTP that could then be used to form the ternary complex EF-1-alpha/GTP/AAtRNA. The chain is Elongation factor 1-beta from Sulfurisphaera tokodaii (strain DSM 16993 / JCM 10545 / NBRC 100140 / 7) (Sulfolobus tokodaii).